Here is a 154-residue protein sequence, read N- to C-terminus: uncharacterized protein (154 aa).

The chain crosses the membrane as a helical span at residues 23 to 43; the sequence is SAVALVTFAGAALSGVIPAIA.

The protein localises to the membrane. This is an uncharacterized protein from Mycobacterium tuberculosis (strain CDC 1551 / Oshkosh).